A 105-amino-acid polypeptide reads, in one-letter code: Phosphoribosyl-AMP cyclohydrolase (105 aa).

Asp72 provides a ligand contact to Mg(2+). Cys73 contacts Zn(2+). The Mg(2+) site is built by Asp74 and Asp76. Cys89 and Cys96 together coordinate Zn(2+).

This sequence belongs to the PRA-CH family. Homodimer. It depends on Mg(2+) as a cofactor. Zn(2+) serves as cofactor.

The protein resides in the cytoplasm. The enzyme catalyses 1-(5-phospho-beta-D-ribosyl)-5'-AMP + H2O = 1-(5-phospho-beta-D-ribosyl)-5-[(5-phospho-beta-D-ribosylamino)methylideneamino]imidazole-4-carboxamide. It functions in the pathway amino-acid biosynthesis; L-histidine biosynthesis; L-histidine from 5-phospho-alpha-D-ribose 1-diphosphate: step 3/9. In terms of biological role, catalyzes the hydrolysis of the adenine ring of phosphoribosyl-AMP. This Listeria monocytogenes serotype 4b (strain CLIP80459) protein is Phosphoribosyl-AMP cyclohydrolase.